Consider the following 260-residue polypeptide: Transmembrane protein 106C (260 aa).

Residue G2 is the site of N-myristoyl glycine attachment. A helical membrane pass occupies residues 85 to 105; it reads YVLLSVLLCLLASGLVFFFLF. An N-linked (GlcNAc...) asparagine glycan is attached at N171. A helical transmembrane segment spans residues 196 to 216; that stretch reads SYVYFYCTLPAILVHNIVIFM.

The protein belongs to the TMEM106 family. Interacts with TMEM106B.

It is found in the endoplasmic reticulum membrane. The protein resides in the membrane. This chain is Transmembrane protein 106C (Tmem106c), found in Rattus norvegicus (Rat).